The chain runs to 152 residues: Early glycoprotein GP48 (152 aa).

Residues 1 to 25 (MVMMLRTWRLLPMVLLAAYCYCVFG) form the signal peptide. 9 N-linked (GlcNAc...) asparagine; by host glycosylation sites follow: Asn48, Asn53, Asn61, Asn69, Asn108, Asn112, Asn122, Asn139, and Asn148.

This sequence belongs to the RL11 family. Post-translationally, N-glycosylated and possibly O-glycosylated.

The protein resides in the virion membrane. This is Early glycoprotein GP48 (UL4) from Homo sapiens (Human).